A 134-amino-acid chain; its full sequence is Probable RNA-binding protein MJ0652 (134 aa).

In terms of domain architecture, CRM spans 11–108 (RKLTGKMKRM…REGWKKYLAK (98 aa)).

This chain is Probable RNA-binding protein MJ0652, found in Methanocaldococcus jannaschii (strain ATCC 43067 / DSM 2661 / JAL-1 / JCM 10045 / NBRC 100440) (Methanococcus jannaschii).